The chain runs to 246 residues: Chaperone protein SefB (246 aa).

Residues 1 to 24 form the signal peptide; that stretch reads MYILNKFIRRTVIFFFFCYLPIAS. Cysteine 124 and cysteine 155 are disulfide-bonded.

Belongs to the periplasmic pilus chaperone family.

It localises to the periplasm. Functionally, required for the biogenesis of the SefA (SEF14) fimbria. The protein is Chaperone protein SefB (sefB) of Salmonella enteritidis.